The sequence spans 219 residues: Protein Cmaq_0360 (219 aa).

The 197-residue stretch at 8 to 204 (EQGKFLVRLA…EKGPRGDVYE (197 aa)) folds into the AMMECR1 domain.

This is Protein Cmaq_0360 from Caldivirga maquilingensis (strain ATCC 700844 / DSM 13496 / JCM 10307 / IC-167).